Consider the following 815-residue polypeptide: MDEVSTVNENENRKTMIEPKKLNKRKREPTAIENLTSEEKESQISSLNLEMKGLFDYFREVMDKSKRTDLFSGFSECSSLNSMVALLMEEMSLPLSKLVDEIYLKLKEKTESVTMVAVKSAVVSVGQRVSYGVLNVDADVLEDDSESCLWCWETRDLKIMPSSVRGVLKLRRTCRKKIHERITAVSAMLAALQREETEKLWRSDLSKAAEKLGKILSEVDIRSFMDNMMQKNSSEMAEKDSKREEKLLLKQLEKNRCEAEKEKKRMERQVLKEKLQQEKEQKLLQKAIVDENNKEKEETESRKRIKKQQDESEKEQKRREKEQAELKKQLQVQKQASIMERFLKKSKDSSLTQPKLPSSEVTAQELSCTKHENEIGKVVQAIDNAFSTTCEATVDDIRREHFASWRQLGHLLSSSKKHWGMRRQPKSELFPKLKLSTNSGVTSDGEPNMEKQGDGCEENNFDGRQCKPSSSNRKKSRRVKQLLQFDKSCRPGFYGIWPSQSQVVKPRRPLQKDPELDYEVDSDEEWEEEEAGESLSDCEKDEDESLEEGCSKADDEDDSEDDFMVPDGYLSEDEGVQVDRMDIDPSEQDANTTSSKQDQESPEFCALLQQQKHLQNLTDHALKKTQPLIICNLTHEKVSLLAAKDLEGTQKVEQICLRALMVRQFPWSSLIEISINDIQDEDQEASKFSCSQSTPPSNSKAKIIPDSDLLTVVSTIQSCSQGINRVVETLQQKFPDVPKTKLRQKVREISDFEDSRWQVKKEVLTKLGLSPSPDKGGKRLPKTISTFFSKRCLPPSTKPQPAVEDAAERLENENA.

Disordered regions lie at residues 1-39, 292-330, 434-477, 502-577, and 791-815; these read MDEV…TSEE, NNKE…KKQL, KLST…KKSR, QVVK…EGVQ, and RCLP…NENA. 2 stretches are compositionally biased toward basic and acidic residues: residues 10–21 and 292–328; these read NENRKTMIEPKK and NNKE…ELKK. Residues 244 to 336 adopt a coiled-coil conformation; it reads EEKLLLKQLE…KKQLQVQKQA (93 aa). Composition is skewed to acidic residues over residues 516 to 532 and 554 to 576; these read LDYE…EEAG and DDED…DEGV. Positions 806–815 are enriched in basic and acidic residues; that stretch reads AAERLENENA.

It belongs to the CHAF1A family. In terms of assembly, component of the chromatin assembly factor 1 (CAF-1) complex, composed of FAS1, FAS2 and MSI1. Interacts with CYP71. As to expression, expressed in the shoot apical meristem, young leaf primordia, root tip and first lateral root primordium at the hypocotyl/root junction.

The protein localises to the nucleus. Functionally, component of the chromatin assembly factor complex (CAF-1) involved in chromatin assembly following DNA replication and DNA repair. Assembles histone octamers onto replicating DNA in vitro. Required for several aspects of development, including seedling growth and leaf hair differentiation. Plays a critical role in the organization of shoot apical meristem (SAM) and root apical meristem (RAM) during postembryonic development by facilitating stable maintenance of gene expression states. Seems not required to maintain transcriptional repression of heterochromatic genes. Involved in heterologous recombination. May repress endocycle. The polypeptide is Chromatin assembly factor 1 subunit FAS1 (FAS1) (Arabidopsis thaliana (Mouse-ear cress)).